We begin with the raw amino-acid sequence, 275 residues long: Cis-2,3-dihydrobiphenyl-2,3-diol dehydrogenase (275 aa).

9–33 (LITGGASGLGRALVDRFVAEAKVAV) contacts NAD(+). S140 is a substrate binding site. Y153 functions as the Proton acceptor in the catalytic mechanism.

It belongs to the short-chain dehydrogenases/reductases (SDR) family.

The catalysed reaction is (2R,3S)-3-phenylcyclohexa-3,5-diene-1,2-diol + NAD(+) = biphenyl-2,3-diol + NADH + H(+). It participates in xenobiotic degradation; biphenyl degradation; 2-hydroxy-2,4-pentadienoate and benzoate from biphenyl: step 2/4. The chain is Cis-2,3-dihydrobiphenyl-2,3-diol dehydrogenase (bphB) from Metapseudomonas furukawaii (Pseudomonas furukawaii).